The sequence spans 339 residues: MRVYYDRDADLNLIKGKKVVIVGYGSQGHAHALNLRDSGVKDIVIALREGSATAKKAEHEGFKVMNVADAAKWGDVVMMLTPDELQGDIYKESLEGNMKQGAALLFAHGLNVHFNLIEPRKDLDVLMVAPKGPGHTVRGEYLKGGGVPTLIAIAQDASGNAHDLGLSYASANGGGRAGIIETTFKEECETDLFGEQAVLCGGLVELIKAGFETLVEAGYAPEMAYFECLHEVKLIVDLIYEGGIANMNYSISNTAEYGEYVTGPRIVTPETKAEMKRVLNDIQSGIFTRNWMLENKVGQTSFKATRAKLAAHPIEEVGAKLRGMMPWISEKALVDKTKN.

The KARI N-terminal Rossmann domain maps to 1–182 (MRVYYDRDAD…GGGRAGIIET (182 aa)). NADP(+) is bound by residues 24–27 (YGSQ), Arg-48, Ser-51, Thr-53, and 83–86 (DELQ). His-108 is a catalytic residue. Residue Gly-134 participates in NADP(+) binding. Residues 183–328 (TFKEECETDL…AKLRGMMPWI (146 aa)) form the KARI C-terminal knotted domain. 4 residues coordinate Mg(2+): Asp-191, Glu-195, Glu-227, and Glu-231. Residue Ser-252 coordinates substrate.

The protein belongs to the ketol-acid reductoisomerase family. Mg(2+) is required as a cofactor.

The catalysed reaction is (2R)-2,3-dihydroxy-3-methylbutanoate + NADP(+) = (2S)-2-acetolactate + NADPH + H(+). It catalyses the reaction (2R,3R)-2,3-dihydroxy-3-methylpentanoate + NADP(+) = (S)-2-ethyl-2-hydroxy-3-oxobutanoate + NADPH + H(+). It functions in the pathway amino-acid biosynthesis; L-isoleucine biosynthesis; L-isoleucine from 2-oxobutanoate: step 2/4. It participates in amino-acid biosynthesis; L-valine biosynthesis; L-valine from pyruvate: step 2/4. Functionally, involved in the biosynthesis of branched-chain amino acids (BCAA). Catalyzes an alkyl-migration followed by a ketol-acid reduction of (S)-2-acetolactate (S2AL) to yield (R)-2,3-dihydroxy-isovalerate. In the isomerase reaction, S2AL is rearranged via a Mg-dependent methyl migration to produce 3-hydroxy-3-methyl-2-ketobutyrate (HMKB). In the reductase reaction, this 2-ketoacid undergoes a metal-dependent reduction by NADPH to yield (R)-2,3-dihydroxy-isovalerate. This chain is Ketol-acid reductoisomerase (NADP(+)), found in Methylorubrum populi (strain ATCC BAA-705 / NCIMB 13946 / BJ001) (Methylobacterium populi).